Consider the following 474-residue polypeptide: ATP synthase subunit beta (474 aa).

An ATP-binding site is contributed by 151-158 (GGAGVGKT).

Belongs to the ATPase alpha/beta chains family. F-type ATPases have 2 components, CF(1) - the catalytic core - and CF(0) - the membrane proton channel. CF(1) has five subunits: alpha(3), beta(3), gamma(1), delta(1), epsilon(1). CF(0) has four main subunits: a(1), b(1), b'(1) and c(9-12).

It localises to the cell inner membrane. It carries out the reaction ATP + H2O + 4 H(+)(in) = ADP + phosphate + 5 H(+)(out). Functionally, produces ATP from ADP in the presence of a proton gradient across the membrane. The catalytic sites are hosted primarily by the beta subunits. The sequence is that of ATP synthase subunit beta from Roseobacter denitrificans (strain ATCC 33942 / OCh 114) (Erythrobacter sp. (strain OCh 114)).